The following is a 260-amino-acid chain: Alpha- and beta-fibrinogenase OhS1 (260 aa).

An N-terminal signal peptide occupies residues 1-18 (MALIRVLASLLILQLSYA). Residues 19 to 24 (VTPFDR) constitute a propeptide that is removed on maturation. The region spanning 25 to 248 (IIGGFECNEY…YIDWIEGIIA (224 aa)) is the Peptidase S1 domain. Intrachain disulfides connect Cys31/Cys163, Cys50/Cys66, Cys98/Cys255, Cys142/Cys209, Cys174/Cys188, and Cys199/Cys224. N-linked (GlcNAc...) asparagine glycosylation occurs at Asn44. His65 serves as the catalytic Charge relay system. Asn79 is a glycosylation site (N-linked (GlcNAc...) asparagine). The Charge relay system role is filled by Asp110. Asn117 and Asn121 each carry an N-linked (GlcNAc...) asparagine glycan. Ser203 acts as the Charge relay system in catalysis. N-linked (GlcNAc...) asparagine glycosylation occurs at Asn250.

Belongs to the peptidase S1 family. Snake venom subfamily. As to quaternary structure, monomer. In terms of tissue distribution, expressed by the venom gland.

The protein resides in the secreted. Completely inhibited by NPGB, PMSF, diisopropylfluorophosphate (DFP), benzamidine and soybean trypsin inhibitor. Not inhibited by EDTA. Its function is as follows. Snake venom serine protease that possesses potent fibrinogenolytic (on both alpha- (FGA) and beta-chains (FGB)) and amidolytic activities. Selectively cleaves Arg-|-Xaa or Lys-|-Xaa bonds. This chain is Alpha- and beta-fibrinogenase OhS1, found in Ophiophagus hannah (King cobra).